A 174-amino-acid polypeptide reads, in one-letter code: Inosine/xanthosine triphosphatase (174 aa).

Position 68 (Asp-68) interacts with Mg(2+). Asp-68–Ala-69 is a binding site for substrate.

Belongs to the YjjX NTPase family. Homodimer. Mg(2+) is required as a cofactor. The cofactor is Mn(2+).

It carries out the reaction XTP + H2O = XDP + phosphate + H(+). The catalysed reaction is ITP + H2O = IDP + phosphate + H(+). Functionally, phosphatase that hydrolyzes non-canonical purine nucleotides such as XTP and ITP to their respective diphosphate derivatives. Probably excludes non-canonical purines from DNA/RNA precursor pool, thus preventing their incorporation into DNA/RNA and avoiding chromosomal lesions. This Photobacterium profundum (strain SS9) protein is Inosine/xanthosine triphosphatase.